A 207-amino-acid polypeptide reads, in one-letter code: Outer-membrane lipoprotein LolB (207 aa).

A signal peptide spans 1–21; sequence MPLPDFRFIRLLPLAALVLTA. A lipid anchor (N-palmitoyl cysteine) is attached at cysteine 22. A lipid anchor (S-diacylglycerol cysteine) is attached at cysteine 22.

It belongs to the LolB family. In terms of assembly, monomer.

It localises to the cell outer membrane. In terms of biological role, plays a critical role in the incorporation of lipoproteins in the outer membrane after they are released by the LolA protein. In Escherichia coli O6:K15:H31 (strain 536 / UPEC), this protein is Outer-membrane lipoprotein LolB.